Consider the following 931-residue polypeptide: Protein translocase subunit SecA (931 aa).

ATP-binding positions include glutamine 87, glycine 105–threonine 109, and aspartate 515. The Zn(2+) site is built by cysteine 915, cysteine 917, cysteine 926, and histidine 927.

It belongs to the SecA family. Monomer and homodimer. Part of the essential Sec protein translocation apparatus which comprises SecA, SecYEG and auxiliary proteins SecDF-YajC and YidC. It depends on Zn(2+) as a cofactor.

Its subcellular location is the cell inner membrane. The protein resides in the cytoplasm. It catalyses the reaction ATP + H2O + cellular proteinSide 1 = ADP + phosphate + cellular proteinSide 2.. In terms of biological role, part of the Sec protein translocase complex. Interacts with the SecYEG preprotein conducting channel. Has a central role in coupling the hydrolysis of ATP to the transfer of proteins into and across the cell membrane, serving both as a receptor for the preprotein-SecB complex and as an ATP-driven molecular motor driving the stepwise translocation of polypeptide chains across the membrane. This is Protein translocase subunit SecA from Burkholderia ambifaria (strain ATCC BAA-244 / DSM 16087 / CCUG 44356 / LMG 19182 / AMMD) (Burkholderia cepacia (strain AMMD)).